The following is a 546-amino-acid chain: Probable ganciclovir kinase (546 aa).

Residues 1-11 (MEQLKTPQNQK) show a composition bias toward polar residues. Residues 1–29 (MEQLKTPQNQKTRPRNMLPKKKGKELKKR) are disordered. A compositionally biased stretch (basic residues) spans 12 to 29 (TRPRNMLPKKKGKELKKR). ATP is bound by residues 185–193 (LGSGSYGMV) and Lys-202. Residue Asp-297 is the Proton acceptor of the active site.

This sequence belongs to the protein kinase superfamily. Tyr protein kinase family. HCMV ganciclovir subfamily.

Functionally, phosphorylates the antiviral nucleoside analog ganciclovir. This chain is Probable ganciclovir kinase (U69), found in Human herpesvirus 7 (strain JI) (HHV-7).